Consider the following 154-residue polypeptide: Bacterial ferritin (154 aa).

Residues 1–145 form the Ferritin-like diiron domain; that stretch reads MQGHPEVIDY…QQLGLIARMG (145 aa). The Fe(3+) site is built by glutamate 18, histidine 46, glutamate 47, glutamate 50, glutamate 51, histidine 54, glutamate 93, aspartate 129, and histidine 130.

It belongs to the bacterioferritin family. As to quaternary structure, the bacterioferritin (BFR) complex is formed of 24 subunits (FtnA and BfrB) arranged as 12 homodimers. The holocomplex contains about 8.7% Fe and 8.0% phosphate. In vivo purifies with BfrB in varying ratios, depending on the O(2) content; as O(2) decreases FtnA content rises. Pure FtnA BFR complexes are not isolated in situ, although in a bfrB deletion some iron will accumulate in FtnA ferritin complexes. Upon crystallization forms homooligomers of 24 subunits, the BFR complex, arranged as 12 dimers, that are packed together to form an approximately spherical molecule with a central cavity, in which large amounts of iron can be deposited. The BFR shell has three- and four-fold pores; Fe(2+) may move in and out of the shell via the four-fold pores. Does not interact with Bfd.

The protein localises to the cytoplasm. It carries out the reaction 4 Fe(2+) + O2 + 4 H(+) = 4 Fe(3+) + 2 H2O. The enzyme catalyses Fe(2+)(in) = Fe(2+)(out). Functionally, plays a role in catalase A (katA) expression; activity is required for optimal KatA activity and resistance to H(2)O(2). Iron-storage protein that is part of the heterooligomeric bacterioferritin (BFR) complex. The ferroxidase center binds Fe(2+), oxidizes it using dioxygen to Fe(3+), and participates in subsequent Fe(3+) oxide mineral core formation within the central cavity of the BFR protein shell. Can store up to 520 iron atoms per ferritin protein molecule. Iron release requires only the input of electrons from ferredoxin NADP reductase (FPR), does not require Bfd. Does not bind heme. This chain is Bacterial ferritin, found in Pseudomonas aeruginosa (strain ATCC 15692 / DSM 22644 / CIP 104116 / JCM 14847 / LMG 12228 / 1C / PRS 101 / PAO1).